The sequence spans 314 residues: MTRTKVAIIGSGNIGTDLMIKVLRTSKHLEMGAMVGIDPASDGLARAGRFGVPTTAEGVEGLVALPGFDDIEIVFDATSAGAHVVNAARLLPLGKRLIDLTPAALGPFTIPAVNLEDHLEAPNLNMVTCGGQATIPIVAAISRVVPVEYAEIVASIASRSAGPGTRANIDEFTETTSSAIVEVGGATRGKAIIILNPAEPPLIMRDTVFALVTAADPDVHEQIRASVDKMVADVAAYVPGYRLKQAVQVTEIPADQPVHTLLAPDAERPTHQVSVFLEVEGAAHYLPAYAGNLDIMTSAALQVAERIAAGKADR.

An NAD(+)-binding site is contributed by 11 to 14 (SGNI). The active-site Acyl-thioester intermediate is cysteine 129. Residues 160–168 (SAGPGTRAN) and asparagine 292 contribute to the NAD(+) site.

The protein belongs to the acetaldehyde dehydrogenase family.

The enzyme catalyses acetaldehyde + NAD(+) + CoA = acetyl-CoA + NADH + H(+). The protein is Acetaldehyde dehydrogenase 1 of Nocardioides sp. (strain ATCC BAA-499 / JS614).